We begin with the raw amino-acid sequence, 137 residues long: Profilin-3 (137 aa).

This sequence belongs to the profilin family. Interacts with ACTRT3.

The protein localises to the cytoplasm. The protein resides in the cytoskeleton. Its subcellular location is the nucleus. In terms of biological role, binds to actin and affects the structure of the cytoskeleton. Binds to poly-L-proline, phosphatidylinositol 3-phosphate (PtdIns(3)P), phosphatidylinositol 4,5-bisphosphate (PtdIns(4,5)P2) and phosphatidylinositol 4-phosphate (PtdIns(4)P). Slightly reduces actin polymerization. May be involved in spermatogenesis. The polypeptide is Profilin-3 (PFN3) (Bos taurus (Bovine)).